A 248-amino-acid polypeptide reads, in one-letter code: tRNA1(Val) (adenine(37)-N6)-methyltransferase (248 aa).

Belongs to the methyltransferase superfamily. tRNA (adenine-N(6)-)-methyltransferase family.

It is found in the cytoplasm. It carries out the reaction adenosine(37) in tRNA1(Val) + S-adenosyl-L-methionine = N(6)-methyladenosine(37) in tRNA1(Val) + S-adenosyl-L-homocysteine + H(+). In terms of biological role, specifically methylates the adenine in position 37 of tRNA(1)(Val) (anticodon cmo5UAC). The sequence is that of tRNA1(Val) (adenine(37)-N6)-methyltransferase from Pectobacterium carotovorum subsp. carotovorum (strain PC1).